Reading from the N-terminus, the 269-residue chain is MSKVIKKRVETSPRPTASSDSLQTCAGVIEYAKSISKSNAKCIECVTLNASQYANCSSISIKLTDSLSSQMTSTFIMLEGETKLYKNKSKQDRSDGYFLKIKVTAASPMLYQLLEAVYGNITHKERIPNSLHSLSAETITEKTFKDESIFINKLNGAMVEYVSTGESSILRSIEGELESLSKRERQLAKAIITPVVFYRSGTETKITFALKKLIIDREVVANVIGLSGDSERVSMTENVEEDLVRNLGLVDIDDEYDEDSDKEKPIFNV.

This sequence belongs to the orthopoxvirus OPG079 family. As to quaternary structure, homoomultimer (Potential). Interacts with the small subunit of ribonucleotide reductase.

It is found in the host cytoplasm. Plays an essential role in viral DNA replication. Binds to ssDNA with high affinity and localizes to cytoplasmic factories where nascent viral genomes accumulate. May disrupt loops, hairpins and other secondary structures present on ssDNA to reduce and eliminate pausing of viral DNA polymerase at specific sites during elongation. The protein is Protein OPG079 (OPG079) of Cynomys gunnisoni (Gunnison's prairie dog).